The primary structure comprises 376 residues: Chaperone protein DnaJ (376 aa).

In terms of domain architecture, J spans 5-70 (DFYDVLGVSK…EKKQNYDNFG (66 aa)). A CR-type zinc finger spans residues 137 to 215 (GKKQDIKFST…CNGQGNKQAS (79 aa)). C150, C153, C167, C170, C189, C192, C203, and C206 together coordinate Zn(2+). CXXCXGXG motif repeat units lie at residues 150 to 157 (CNTCNGNG), 167 to 174 (CTVCGGNG), 189 to 196 (CPQCAGSG), and 203 to 210 (CTDCNGQG).

Belongs to the DnaJ family. In terms of assembly, homodimer. The cofactor is Zn(2+).

Its subcellular location is the cytoplasm. Participates actively in the response to hyperosmotic and heat shock by preventing the aggregation of stress-denatured proteins and by disaggregating proteins, also in an autonomous, DnaK-independent fashion. Unfolded proteins bind initially to DnaJ; upon interaction with the DnaJ-bound protein, DnaK hydrolyzes its bound ATP, resulting in the formation of a stable complex. GrpE releases ADP from DnaK; ATP binding to DnaK triggers the release of the substrate protein, thus completing the reaction cycle. Several rounds of ATP-dependent interactions between DnaJ, DnaK and GrpE are required for fully efficient folding. Also involved, together with DnaK and GrpE, in the DNA replication of plasmids through activation of initiation proteins. In Pelagibacter ubique (strain HTCC1062), this protein is Chaperone protein DnaJ.